The primary structure comprises 439 residues: Probable cinnamyl alcohol dehydrogenase 8C (439 aa).

Cys-120 is a Zn(2+) binding site. Position 122 (Thr-122) interacts with NADP(+). Zn(2+) is bound by residues His-142, Glu-143, Cys-173, Cys-176, Cys-179, Cys-187, and Cys-239. Residues Thr-243, 264-269 (GLGGLG), 287-292 (STSPGK), Thr-327, Gly-351, and 374-376 (NCV) each bind NADP(+).

This sequence belongs to the zinc-containing alcohol dehydrogenase family. In terms of assembly, homodimer. Requires Zn(2+) as cofactor.

The enzyme catalyses (E)-cinnamyl alcohol + NADP(+) = (E)-cinnamaldehyde + NADPH + H(+). The catalysed reaction is (E)-coniferol + NADP(+) = (E)-coniferaldehyde + NADPH + H(+). It carries out the reaction (E)-sinapyl alcohol + NADP(+) = (E)-sinapaldehyde + NADPH + H(+). It catalyses the reaction (E)-4-coumaroyl alcohol + NADP(+) = (E)-4-coumaraldehyde + NADPH + H(+). The enzyme catalyses (E)-caffeyl alcohol + NADP(+) = (E)-caffeyl aldehyde + NADPH + H(+). It functions in the pathway aromatic compound metabolism; phenylpropanoid biosynthesis. Its function is as follows. Involved in lignin biosynthesis. Catalyzes the final step specific for the production of lignin monomers. Catalyzes the NADPH-dependent reduction of coniferaldehyde, 5-hydroxyconiferaldehyde, sinapaldehyde, 4-coumaraldehyde and caffeyl aldehyde to their respective alcohols. This is Probable cinnamyl alcohol dehydrogenase 8C from Oryza sativa subsp. japonica (Rice).